The following is a 169-amino-acid chain: Large ribosomal subunit protein uL10 (169 aa).

It belongs to the universal ribosomal protein uL10 family. In terms of assembly, part of the ribosomal stalk of the 50S ribosomal subunit. The N-terminus interacts with L11 and the large rRNA to form the base of the stalk. The C-terminus forms an elongated spine to which L12 dimers bind in a sequential fashion forming a multimeric L10(L12)X complex.

Functionally, forms part of the ribosomal stalk, playing a central role in the interaction of the ribosome with GTP-bound translation factors. The protein is Large ribosomal subunit protein uL10 of Deinococcus geothermalis (strain DSM 11300 / CIP 105573 / AG-3a).